The following is a 287-amino-acid chain: NAD kinase (287 aa).

The active-site Proton acceptor is the D70. NAD(+)-binding positions include 70-71 (DG), 144-145 (ND), R155, K172, D174, 185-190 (TAYSLS), and Q244.

Belongs to the NAD kinase family. The cofactor is a divalent metal cation.

It localises to the cytoplasm. The enzyme catalyses NAD(+) + ATP = ADP + NADP(+) + H(+). In terms of biological role, involved in the regulation of the intracellular balance of NAD and NADP, and is a key enzyme in the biosynthesis of NADP. Catalyzes specifically the phosphorylation on 2'-hydroxyl of the adenosine moiety of NAD to yield NADP. The polypeptide is NAD kinase (Solibacter usitatus (strain Ellin6076)).